The sequence spans 97 residues: Serine protease inhibitor Kazal-type 14 (97 aa).

An N-terminal signal peptide occupies residues 1–21 (MAKSFPVFSLLSFILIHLVLS). Residues 34 to 97 (GIIKVKCPYE…RIRFYHDGKC (64 aa)) form the Kazal-like domain. Cystine bridges form between Cys40-Cys79, Cys57-Cys76, and Cys65-Cys97. N-linked (GlcNAc...) asparagine glycosylation occurs at Asn51.

It localises to the secreted. In terms of biological role, may be a serine protease inhibitor. The protein is Serine protease inhibitor Kazal-type 14 (SPINK14) of Homo sapiens (Human).